Here is a 477-residue protein sequence, read N- to C-terminus: MKILFVAAEVSPLAKVGGMGDVVGSLPKVLHQLGHDVRVFMPYYGFIGDKIDVPKEPVWKGEAMFQQFAVYQSYLPDTKIPLYLFGHPAFDSRRIYGGDDEAWRFTFFSNGAAEFAWNHWKPEIIHCHDWHTGMIPVWMHQSPDIATVFTIHNLAYQGPWRGLLETMTWCPWYMQGDNVMAAAIQFANRVTTVSPTYAQQIQTPAYGEKLEGLLSYLSGNLVGILNGIDTEIYNPAEDRFISNVFDADSLDKRVKNKIAIQEETGLEINRNAMVVGIVARLVEQKGIDLVIQILDRFMSYTDSQLIILGTGDRHYETQLWQMASRFPGRMAVQLLHNDALSRRVYAGADVFLMPSRFEPCGLSQLMAMRYGCIPIVRRTGGLVDTVSFYDPINEAGTGYCFDRYEPLDCFTAMVRAWEGFRFKADWQKLQQRAMRADFSWYRSAGEYIKVYKGVVGKPEELSPMEEEKIAELTASYR.

Lysine 15 contributes to the ADP-alpha-D-glucose binding site.

Belongs to the glycosyltransferase 1 family. Bacterial/plant glycogen synthase subfamily.

The enzyme catalyses [(1-&gt;4)-alpha-D-glucosyl](n) + ADP-alpha-D-glucose = [(1-&gt;4)-alpha-D-glucosyl](n+1) + ADP + H(+). The protein operates within glycan biosynthesis; glycogen biosynthesis. Its function is as follows. Synthesizes alpha-1,4-glucan chains using ADP-glucose. The sequence is that of Glycogen synthase 1 (glgA1) from Synechocystis sp. (strain ATCC 27184 / PCC 6803 / Kazusa).